The sequence spans 79 residues: Small ribosomal subunit protein bS18 (79 aa).

This sequence belongs to the bacterial ribosomal protein bS18 family. In terms of assembly, part of the 30S ribosomal subunit. Forms a tight heterodimer with protein bS6.

In terms of biological role, binds as a heterodimer with protein bS6 to the central domain of the 16S rRNA, where it helps stabilize the platform of the 30S subunit. In Nitrobacter winogradskyi (strain ATCC 25391 / DSM 10237 / CIP 104748 / NCIMB 11846 / Nb-255), this protein is Small ribosomal subunit protein bS18.